Consider the following 405-residue polypeptide: Acetate kinase (405 aa).

A Mg(2+)-binding site is contributed by asparagine 7. Residue lysine 14 participates in ATP binding. Arginine 91 provides a ligand contact to substrate. The active-site Proton donor/acceptor is aspartate 148. Residues 208 to 212 (HLGNG) and 283 to 285 (DFR) each bind ATP. Position 384 (glutamate 384) interacts with Mg(2+).

Belongs to the acetokinase family. In terms of assembly, homodimer. Mg(2+) serves as cofactor. The cofactor is Mn(2+).

It is found in the cytoplasm. The enzyme catalyses acetate + ATP = acetyl phosphate + ADP. It functions in the pathway metabolic intermediate biosynthesis; acetyl-CoA biosynthesis; acetyl-CoA from acetate: step 1/2. Its function is as follows. Catalyzes the formation of acetyl phosphate from acetate and ATP. Can also catalyze the reverse reaction. The protein is Acetate kinase of Dictyoglomus turgidum (strain DSM 6724 / Z-1310).